Reading from the N-terminus, the 113-residue chain is Dolichyl-diphosphooligosaccharide--protein glycosyltransferase subunit DAD1 (113 aa).

Position 2 is an N-acetylserine (Ser-2). At 2-30 (SASVVSVISRFLEEYLSSTPQRLKLLDAY) the chain is on the cytoplasmic side. A helical transmembrane segment spans residues 31 to 51 (LLYILLTGALQFGYCLLVGTF). A topological domain (lumenal) is located at residue Pro-52. A helical membrane pass occupies residues 53–73 (FNSFLSGFISCVGSFILAVCL). At 74-92 (RIQINPQNKADFQGISPER) the chain is on the cytoplasmic side. A helical membrane pass occupies residues 93–113 (AFADFLFASTILHLVVMNFVG).

It belongs to the DAD/OST2 family. In terms of assembly, component of the oligosaccharyltransferase (OST) complex. OST exists in two different complex forms which contain common core subunits RPN1, RPN2, OST48, OST4, DAD1 and TMEM258, either STT3A or STT3B as catalytic subunits, and form-specific accessory subunits. STT3A complex assembly occurs through the formation of 3 subcomplexes. Subcomplex 1 contains RPN1 and TMEM258, subcomplex 2 contains the STT3A-specific subunits STT3A, DC2/OSTC, and KCP2 as well as the core subunit OST4, and subcomplex 3 contains RPN2, DAD1, and OST48. The STT3A complex can form stable complexes with the Sec61 complex or with both the Sec61 and TRAP complexes.

The protein resides in the endoplasmic reticulum membrane. It functions in the pathway protein modification; protein glycosylation. Its function is as follows. Subunit of the oligosaccharyl transferase (OST) complex that catalyzes the initial transfer of a defined glycan (Glc(3)Man(9)GlcNAc(2) in eukaryotes) from the lipid carrier dolichol-pyrophosphate to an asparagine residue within an Asn-X-Ser/Thr consensus motif in nascent polypeptide chains, the first step in protein N-glycosylation. N-glycosylation occurs cotranslationally and the complex associates with the Sec61 complex at the channel-forming translocon complex that mediates protein translocation across the endoplasmic reticulum (ER). All subunits are required for a maximal enzyme activity. The polypeptide is Dolichyl-diphosphooligosaccharide--protein glycosyltransferase subunit DAD1 (Mus musculus (Mouse)).